The sequence spans 445 residues: Dolichyl-diphosphooligosaccharide--protein glycosyltransferase 48 kDa subunit (445 aa).

The N-terminal stretch at 1–20 (MRWLPGLLLIASIGFHQSLA) is a signal peptide. The Lumenal segment spans residues 21–405 (DRVLVLGETA…YERFIRSAYP (385 aa)). The helical transmembrane segment at 406–426 (YYASSFSMMAGLVLFSIVYLY) threads the bilayer. Topologically, residues 427 to 445 (HKDTPVKGAKVLDSEKKKN) are cytoplasmic.

The protein belongs to the DDOST 48 kDa subunit family. As to quaternary structure, component of the oligosaccharyltransferase (OST) complex.

The protein localises to the endoplasmic reticulum membrane. It participates in protein modification; protein glycosylation. Its function is as follows. Subunit of the oligosaccharyl transferase (OST) complex that catalyzes the initial transfer of a defined glycan (Glc(3)Man(9)GlcNAc(2) in eukaryotes) from the lipid carrier dolichol-pyrophosphate to an asparagine residue within an Asn-X-Ser/Thr consensus motif in nascent polypeptide chains, the first step in protein N-glycosylation. N-glycosylation occurs cotranslationally and the complex associates with the Sec61 complex at the channel-forming translocon complex that mediates protein translocation across the endoplasmic reticulum (ER). All subunits are required for a maximal enzyme activity. Required for the assembly of both SST3A- and SS3B-containing OST complexes. Required for normal lifespan. This Caenorhabditis elegans protein is Dolichyl-diphosphooligosaccharide--protein glycosyltransferase 48 kDa subunit.